Reading from the N-terminus, the 331-residue chain is MDFCLLNEKSQIFVHAEPYAVSDYVNQYVGTHSIRLPKGGRPAGRLHHRIFGCLDLCRISYGGSVRVISPGLETCYHLQIILKGHCLWRGYGQEHYFSPGELLLLNPDDQADLTYSEDCEKFIVKLPSVVLDRACSDNNWHKPREGIRFAARHNLQQLDGFINLLGLVCDEAEHTKSMPRVQEHYAGIIASKLLEMLGSNVSREIFSKGNPSFERVVQFIEENLKRNISLERLAELALMSPRSLYTLFEKHAGTTPKNYIRNRKLECIRARLSDPNANVRSVTEMALDYGFFHTGRFAENYRSTFGELPSDTLRRRKMKWLDPEESLPPLP.

The 102-residue stretch at 214–315 (ERVVQFIEEN…GELPSDTLRR (102 aa)) folds into the HTH araC/xylS-type domain. 2 consecutive DNA-binding regions (H-T-H motif) follow at residues 231 to 252 (ERLAELALMSPRSLYTLFEKHA) and 282 to 305 (VTEMALDYGFFHTGRFAENYRSTF).

It localises to the cytoplasm. Its function is as follows. Regulatory protein of the TOL plasmid xyl operons. XylS activates the xylXYZLTEGFJQKIH operon required for the degradation of toluene, m-xylene and p-xylene. The protein is XylDLEGF operon transcriptional activator 1 (xylS1) of Pseudomonas putida (Arthrobacter siderocapsulatus).